The chain runs to 454 residues: UPF0210 protein EUBELI_01067 (454 aa).

The protein belongs to the UPF0210 family. In terms of assembly, homodimer.

The sequence is that of UPF0210 protein EUBELI_01067 from Lachnospira eligens (strain ATCC 27750 / DSM 3376 / VPI C15-48 / C15-B4) (Eubacterium eligens).